A 380-amino-acid polypeptide reads, in one-letter code: 8-amino-7-oxononanoate synthase (380 aa).

Arginine 26 is a substrate binding site. Residue 104–105 coordinates pyridoxal 5'-phosphate; it reads GY. Histidine 129 contacts substrate. Pyridoxal 5'-phosphate-binding positions include serine 175, 200 to 203, and 232 to 235; these read DEAH and TLSK. The residue at position 235 (lysine 235) is an N6-(pyridoxal phosphate)lysine. Threonine 345 is a binding site for substrate.

Belongs to the class-II pyridoxal-phosphate-dependent aminotransferase family. BioF subfamily. Homodimer. The cofactor is pyridoxal 5'-phosphate.

The enzyme catalyses 6-carboxyhexanoyl-[ACP] + L-alanine + H(+) = (8S)-8-amino-7-oxononanoate + holo-[ACP] + CO2. It functions in the pathway cofactor biosynthesis; biotin biosynthesis. Catalyzes the decarboxylative condensation of pimeloyl-[acyl-carrier protein] and L-alanine to produce 8-amino-7-oxononanoate (AON), [acyl-carrier protein], and carbon dioxide. The protein is 8-amino-7-oxononanoate synthase of Mycolicibacterium gilvum (strain PYR-GCK) (Mycobacterium gilvum (strain PYR-GCK)).